We begin with the raw amino-acid sequence, 228 residues long: MKSTRPFHPTPVITIDGPTASGKGTVAALVAAHLGFHLLDSGALYRLAALASVRYGIAAEDIDALVKLIDDLHITFREGCAQLDGVDVSNDIRAEAVGNRASAIAVHGPVRTALVARQRAFRKTPGLVADGRDMGTVIFPDAVLKVFLTASAEARATRRHKQLMQKGFSANIDDLLRDLRERDARDSNRAAAPLKPAADAKLLDTSALSVDEAVDQVLQWYRALGQPA.

17–25 lines the ATP pocket; sequence GPTASGKGT.

It belongs to the cytidylate kinase family. Type 1 subfamily.

It is found in the cytoplasm. The catalysed reaction is CMP + ATP = CDP + ADP. The enzyme catalyses dCMP + ATP = dCDP + ADP. The sequence is that of Cytidylate kinase from Burkholderia cenocepacia (strain HI2424).